The chain runs to 247 residues: ATP synthase subunit a (247 aa).

The next 6 membrane-spanning stretches (helical) occupy residues 24–44 (IAFT…SLLM), 82–102 (FFPF…VGII), 112–132 (IIVT…YGFY), 141–161 (LFVP…IEVI), 194–214 (MLGA…ALVV), and 219–239 (LELL…CIYI).

It belongs to the ATPase A chain family. In terms of assembly, F-type ATPases have 2 components, CF(1) - the catalytic core - and CF(0) - the membrane proton channel. CF(1) has five subunits: alpha(3), beta(3), gamma(1), delta(1), epsilon(1). CF(0) has three main subunits: a(1), b(2) and c(9-12). The alpha and beta chains form an alternating ring which encloses part of the gamma chain. CF(1) is attached to CF(0) by a central stalk formed by the gamma and epsilon chains, while a peripheral stalk is formed by the delta and b chains.

The protein resides in the cell inner membrane. In terms of biological role, key component of the proton channel; it plays a direct role in the translocation of protons across the membrane. This Nitrobacter winogradskyi (strain ATCC 25391 / DSM 10237 / CIP 104748 / NCIMB 11846 / Nb-255) protein is ATP synthase subunit a.